A 395-amino-acid polypeptide reads, in one-letter code: Vibriobactin-specific isochorismate synthase (395 aa).

This sequence belongs to the isochorismate synthase family.

The catalysed reaction is chorismate = isochorismate. Its pathway is siderophore biosynthesis; vibriobactin biosynthesis. The chain is Vibriobactin-specific isochorismate synthase (vibC) from Vibrio cholerae serotype O1 (strain ATCC 39315 / El Tor Inaba N16961).